A 346-amino-acid chain; its full sequence is c-di-GMP synthase (346 aa).

Belongs to the CD-NTase family.

It carries out the reaction 2 GTP = 3',3'-c-di-GMP + 2 diphosphate. Cyclic nucleotide synthase (second messenger synthase) of a CBASS antivirus system. CBASS (cyclic oligonucleotide-based antiphage signaling system) provides immunity against bacteriophage. The CD-NTase protein synthesizes cyclic nucleotides in response to infection; these serve as specific second messenger signals. The signals activate a diverse range of effectors, leading to bacterial cell death and thus abortive phage infection. A type I-D(GG) CBASS system. In terms of biological role, cyclic dinucleotide synthase that catalyzes the synthesis of c-di-GMP, has no activity with other NTP substrates. In Lachnospiraceae bacterium (strain RUG226), this protein is c-di-GMP synthase.